Consider the following 357-residue polypeptide: 5-hydroxytryptamine receptor 5A (357 aa).

At 1 to 36 the chain is on the extracellular side; that stretch reads MDLPINLTSFSLSTPSTLEPNRSLDTEALRTSQSFL. Residues N6 and N21 are each glycosylated (N-linked (GlcNAc...) asparagine). Residues 37-63 traverse the membrane as a helical segment; it reads SAFRVLVLTLLGFLAAATFTWNLLVLA. Residues 64–76 are Cytoplasmic-facing; sequence TILRVRTFHRVPH. A helical transmembrane segment spans residues 77–103; sequence NLVASMAISDVLVAVLVMPLSLVHELS. The Extracellular segment spans residues 104-114; it reads GRRWQLGRRLC. An intrachain disulfide couples C114 to C192. A helical transmembrane segment spans residues 115 to 137; sequence QLWIACDVLCCTASIWNVTAIAL. Residue D121 coordinates serotonin. The Cytoplasmic segment spans residues 138–155; sequence DRYWSITRHLEYTLRARK. The helical transmembrane segment at 156 to 176 threads the bilayer; that stretch reads RVSNVMILLTWALSAVISLAP. Residues 177-198 are Extracellular-facing; that stretch reads LLFGWGETYSELSEECQVSREP. A helical transmembrane segment spans residues 199 to 220; it reads SYTVFSTVGAFYLPLCVVLFVY. Over 221–287 the chain is Cytoplasmic; the sequence is WKIYKAAKFR…QKEQRAALMV (67 aa). The chain crosses the membrane as a helical span at residues 288–312; that stretch reads GILIGVFVLCWFPFFVTELISPLCS. The Extracellular portion of the chain corresponds to 313-314; sequence WD. Residues 315–339 form a helical membrane-spanning segment; sequence IPALWKSIFLWLGYSNSFFNPLIYT. The Cytoplasmic portion of the chain corresponds to 340 to 357; it reads AFNRSYSSAFKVFFSKQQ.

Belongs to the G-protein coupled receptor 1 family. Central nervous system.

The protein resides in the cell membrane. Its function is as follows. G-protein coupled receptor for 5-hydroxytryptamine (serotonin), a biogenic hormone that functions as a neurotransmitter, a hormone and a mitogen. Also functions as a receptor for ergot alkaloid derivatives and other psychoactive substances. Ligand binding causes a conformation change that triggers signaling via guanine nucleotide-binding proteins (G proteins) and modulates the activity of downstream effectors. Htr5a is coupled to G(i)/G(o) G alpha proteins and mediates inhibitory neurotransmission: signaling inhibits adenylate cyclase activity and activates a phosphatidylinositol-calcium second messenger system that regulates the release of Ca(2+) ions from intracellular stores. The polypeptide is 5-hydroxytryptamine receptor 5A (Rattus norvegicus (Rat)).